The chain runs to 154 residues: 6,7-dimethyl-8-ribityllumazine synthase (154 aa).

5-amino-6-(D-ribitylamino)uracil is bound by residues Phe-23, 57–59 (AYE), and 81–83 (AVI). 86 to 87 (AT) contacts (2S)-2-hydroxy-3-oxobutyl phosphate. His-89 acts as the Proton donor in catalysis. Phe-114 provides a ligand contact to 5-amino-6-(D-ribitylamino)uracil. Position 128 (Arg-128) interacts with (2S)-2-hydroxy-3-oxobutyl phosphate.

It belongs to the DMRL synthase family.

It catalyses the reaction (2S)-2-hydroxy-3-oxobutyl phosphate + 5-amino-6-(D-ribitylamino)uracil = 6,7-dimethyl-8-(1-D-ribityl)lumazine + phosphate + 2 H2O + H(+). Its pathway is cofactor biosynthesis; riboflavin biosynthesis; riboflavin from 2-hydroxy-3-oxobutyl phosphate and 5-amino-6-(D-ribitylamino)uracil: step 1/2. Functionally, catalyzes the formation of 6,7-dimethyl-8-ribityllumazine by condensation of 5-amino-6-(D-ribitylamino)uracil with 3,4-dihydroxy-2-butanone 4-phosphate. This is the penultimate step in the biosynthesis of riboflavin. This Desulforamulus reducens (strain ATCC BAA-1160 / DSM 100696 / MI-1) (Desulfotomaculum reducens) protein is 6,7-dimethyl-8-ribityllumazine synthase.